Consider the following 214-residue polypeptide: Probable nicotinate-nucleotide adenylyltransferase (214 aa).

This sequence belongs to the NadD family.

It carries out the reaction nicotinate beta-D-ribonucleotide + ATP + H(+) = deamido-NAD(+) + diphosphate. It participates in cofactor biosynthesis; NAD(+) biosynthesis; deamido-NAD(+) from nicotinate D-ribonucleotide: step 1/1. Functionally, catalyzes the reversible adenylation of nicotinate mononucleotide (NaMN) to nicotinic acid adenine dinucleotide (NaAD). This Aeromonas hydrophila subsp. hydrophila (strain ATCC 7966 / DSM 30187 / BCRC 13018 / CCUG 14551 / JCM 1027 / KCTC 2358 / NCIMB 9240 / NCTC 8049) protein is Probable nicotinate-nucleotide adenylyltransferase.